Reading from the N-terminus, the 272-residue chain is Ribosomal RNA small subunit methyltransferase A (272 aa).

Histidine 10, leucine 12, glycine 37, glutamate 57, aspartate 82, and asparagine 98 together coordinate S-adenosyl-L-methionine.

The protein belongs to the class I-like SAM-binding methyltransferase superfamily. rRNA adenine N(6)-methyltransferase family. RsmA subfamily.

It is found in the cytoplasm. The enzyme catalyses adenosine(1518)/adenosine(1519) in 16S rRNA + 4 S-adenosyl-L-methionine = N(6)-dimethyladenosine(1518)/N(6)-dimethyladenosine(1519) in 16S rRNA + 4 S-adenosyl-L-homocysteine + 4 H(+). Its function is as follows. Specifically dimethylates two adjacent adenosines (A1518 and A1519) in the loop of a conserved hairpin near the 3'-end of 16S rRNA in the 30S particle. May play a critical role in biogenesis of 30S subunits. This Gloeobacter violaceus (strain ATCC 29082 / PCC 7421) protein is Ribosomal RNA small subunit methyltransferase A.